We begin with the raw amino-acid sequence, 43 residues long: Cytochrome b559 subunit beta (43 aa).

The chain crosses the membrane as a helical span at residues 18–34 (WLAIHGLAIPTVFFLGG). Position 22 (His22) interacts with heme.

It belongs to the PsbE/PsbF family. As to quaternary structure, heterodimer of an alpha subunit and a beta subunit. PSII is composed of 1 copy each of membrane proteins PsbA, PsbB, PsbC, PsbD, PsbE, PsbF, PsbH, PsbI, PsbJ, PsbK, PsbL, PsbM, PsbT, PsbX, PsbY, PsbZ, Psb30/Ycf12, at least 3 peripheral proteins of the oxygen-evolving complex and a large number of cofactors. It forms dimeric complexes. Requires heme b as cofactor.

The protein localises to the plastid. The protein resides in the chloroplast thylakoid membrane. Functionally, this b-type cytochrome is tightly associated with the reaction center of photosystem II (PSII). PSII is a light-driven water:plastoquinone oxidoreductase that uses light energy to abstract electrons from H(2)O, generating O(2) and a proton gradient subsequently used for ATP formation. It consists of a core antenna complex that captures photons, and an electron transfer chain that converts photonic excitation into a charge separation. This is Cytochrome b559 subunit beta from Phaeodactylum tricornutum (strain CCAP 1055/1).